Reading from the N-terminus, the 279-residue chain is Shikimate dehydrogenase (NADP(+)) (279 aa).

Shikimate is bound by residues 21–23 (SRS) and threonine 68. Lysine 72 acts as the Proton acceptor in catalysis. Position 83 (aspartate 83) interacts with NADP(+). Residues asparagine 92 and aspartate 107 each coordinate shikimate. Residues 132–136 (GAGGA), 156–161 (NRTVER), and leucine 221 each bind NADP(+). Tyrosine 223 contacts shikimate. Glycine 244 lines the NADP(+) pocket.

The protein belongs to the shikimate dehydrogenase family. As to quaternary structure, homodimer.

It catalyses the reaction shikimate + NADP(+) = 3-dehydroshikimate + NADPH + H(+). Its pathway is metabolic intermediate biosynthesis; chorismate biosynthesis; chorismate from D-erythrose 4-phosphate and phosphoenolpyruvate: step 4/7. In terms of biological role, involved in the biosynthesis of the chorismate, which leads to the biosynthesis of aromatic amino acids. Catalyzes the reversible NADPH linked reduction of 3-dehydroshikimate (DHSA) to yield shikimate (SA). The chain is Shikimate dehydrogenase (NADP(+)) from Nitrobacter winogradskyi (strain ATCC 25391 / DSM 10237 / CIP 104748 / NCIMB 11846 / Nb-255).